Here is a 107-residue protein sequence, read N- to C-terminus: Thiosulfate sulfurtransferase GlpE (107 aa).

A Rhodanese domain is found at 17–105 (ADDNALLVDI…WRIAFPQQVS (89 aa)). Residue C65 is the Cysteine persulfide intermediate of the active site.

The protein belongs to the GlpE family.

It is found in the cytoplasm. The catalysed reaction is thiosulfate + hydrogen cyanide = thiocyanate + sulfite + 2 H(+). The enzyme catalyses thiosulfate + [thioredoxin]-dithiol = [thioredoxin]-disulfide + hydrogen sulfide + sulfite + 2 H(+). In terms of biological role, transferase that catalyzes the transfer of sulfur from thiosulfate to thiophilic acceptors such as cyanide or dithiols. May function in a CysM-independent thiosulfate assimilation pathway by catalyzing the conversion of thiosulfate to sulfite, which can then be used for L-cysteine biosynthesis. The chain is Thiosulfate sulfurtransferase GlpE from Erwinia tasmaniensis (strain DSM 17950 / CFBP 7177 / CIP 109463 / NCPPB 4357 / Et1/99).